Reading from the N-terminus, the 208-residue chain is Ribosomal RNA small subunit methyltransferase G (208 aa).

S-adenosyl-L-methionine-binding positions include G76, L81, 127–128 (VE), and R142.

The protein belongs to the methyltransferase superfamily. RNA methyltransferase RsmG family.

It is found in the cytoplasm. It catalyses the reaction guanosine(527) in 16S rRNA + S-adenosyl-L-methionine = N(7)-methylguanosine(527) in 16S rRNA + S-adenosyl-L-homocysteine. Specifically methylates the N7 position of guanine in position 527 of 16S rRNA. This is Ribosomal RNA small subunit methyltransferase G from Legionella pneumophila subsp. pneumophila (strain Philadelphia 1 / ATCC 33152 / DSM 7513).